The following is a 217-amino-acid chain: Probable transaldolase (217 aa).

Residue K83 is the Schiff-base intermediate with substrate of the active site.

Belongs to the transaldolase family. Type 3B subfamily.

The protein resides in the cytoplasm. The catalysed reaction is D-sedoheptulose 7-phosphate + D-glyceraldehyde 3-phosphate = D-erythrose 4-phosphate + beta-D-fructose 6-phosphate. It participates in carbohydrate degradation; pentose phosphate pathway; D-glyceraldehyde 3-phosphate and beta-D-fructose 6-phosphate from D-ribose 5-phosphate and D-xylulose 5-phosphate (non-oxidative stage): step 2/3. In terms of biological role, transaldolase is important for the balance of metabolites in the pentose-phosphate pathway. This chain is Probable transaldolase, found in Maricaulis maris (strain MCS10) (Caulobacter maris).